The sequence spans 573 residues: MSRVLSRRDIADRIAKGQTIVIYEDSVLNLDKWIKFHPGGDKSIYHMIGRDATDEMNAYHDDQTITKFKIWKIGRIDYPWENMLPPIQGGRFSKIDERDDIGDYDINLTSKWRSVDESNQYTKIPKNDRLASEAEVKIYPKIPQGVVPSLDLKEAYEKKIVVDPAIVSENYDNERVYEDLTNFPSLDVKNQEWIASEYRKLHGEITAAGLYQCNYVRYLKEFLRIGTLFGISFYLLSLKWFAISAICLGFAWQQLVFIAHDAGHISITHNYQVDNIIGMTVASWIGGLSLGWWKRNHNVHHLVTNDPVHDPDIQHLPFFAVSTRLFHNVYSTYYDKFLWFDKFAQKVVPIQHYLYYPILCFGRFNLYRLSWMHVLLGQGPRRGKAAWFRYYELAGLSFFNYWFFYLIIYKQMPTNAERFKYVMISHIATMIVHVQITLSHFAMSTSDLGVTESFPMRQLRTSMDVDCPRWLDFFHGGLQFQVIHHLFPRLPRHNLRDAQSLVIKFCDKVGIKYSIYGFAAGNDVVISHLQQIAQQAHTMLECAKTMKKEATDTEFHTNKHVLAANVNEKRKQE.

Residues 2–77 enclose the Cytochrome b5 heme-binding domain; that stretch reads SRVLSRRDIA…FKIWKIGRID (76 aa). Heme-binding residues include His37 and His60. The helical transmembrane segment at 228–248 threads the bilayer; that stretch reads LFGISFYLLSLKWFAISAICL. The Histidine box-1 signature appears at 260-264; it reads HDAGH. The helical transmembrane segment at 273–293 threads the bilayer; it reads VDNIIGMTVASWIGGLSLGWW. The Histidine box-2 signature appears at 297-301; sequence HNVHH. 3 helical membrane passes run 353 to 372, 393 to 413, and 422 to 442; these read YLYY…LSWM, LAGL…KQMP, and VMIS…SHFA. Positions 481 to 485 match the Histidine box-3 motif; that stretch reads QVIHH.

The protein belongs to the fatty acid desaturase type 1 family.

It localises to the membrane. The catalysed reaction is an N-acylsphing-4-enine + 2 Fe(II)-[cytochrome b5] + O2 + 2 H(+) = a (4E,8E)-4-sphinga-4,8-dienine ceramide + 2 Fe(III)-[cytochrome b5] + 2 H2O. It participates in lipid metabolism; sphingolipid metabolism. Delta(8)-fatty-acid desaturase which introduces a double bond at the 8-position in the long-chain base (LCB) of ceramides. Required for the formation of the di-unsaturated sphingoid base (E,E)-sphinga-4,8-dienine during glucosylceramide (GluCer) biosynthesis. This is Delta 8-(E)-sphingolipid desaturase from Kluyveromyces lactis (strain ATCC 8585 / CBS 2359 / DSM 70799 / NBRC 1267 / NRRL Y-1140 / WM37) (Yeast).